A 584-amino-acid polypeptide reads, in one-letter code: Probable lysosomal cobalamin transporter (584 aa).

A run of 10 helical transmembrane segments spans residues 8–28 (LIWIVYAIVVGILSIVASTFV), 46–66 (IFTLTALLATVLLLPVDVALV), 93–113 (TVVYYFLYSLDAVLCLLIVPF), 144–164 (TLVFILLTIILFLVGFFVPVA), 189–209 (ALTFALGLLIVMGIIVYVIYS), 313–333 (LLGGLLLLAISVMIWISMLLT), 350–370 (ILGKINIINPVNWVLVEAASV), 376–396 (VIFIVLVLHLFTSSVVGIATI), 421–441 (ATVMLTLITLALNYSISMIVV), and 509–529 (GIVDFWAQFVFLGFSLIVLLI).

Belongs to the LIMR family. LMBRD1 subfamily.

It localises to the lysosome membrane. In terms of biological role, probable lysosomal cobalamin transporter. Required to export cobalamin from lysosomes allowing its conversion to cofactors. The protein is Probable lysosomal cobalamin transporter of Coccidioides immitis (strain RS) (Valley fever fungus).